The following is a 329-amino-acid chain: Vitamin B12 import system permease protein BtuC (329 aa).

The next 9 membrane-spanning stretches (helical) occupy residues 18 to 38 (WLLS…CAGE), 64 to 84 (LAVL…QALF), 91 to 111 (PGLL…VLLG), 115 to 135 (LPGW…TLIL), 149 to 169 (LLAG…AIYF), 191 to 208 (WQQS…IWIC), 243 to 263 (GWMV…GLVI), 277 to 297 (VLLP…DVVA), and 305 to 325 (ELPI…WLLL).

It belongs to the binding-protein-dependent transport system permease family. FecCD subfamily. As to quaternary structure, the complex is composed of two ATP-binding proteins (BtuD), two transmembrane proteins (BtuC) and a solute-binding protein (BtuF).

It localises to the cell inner membrane. In terms of biological role, part of the ABC transporter complex BtuCDF involved in vitamin B12 import. Involved in the translocation of the substrate across the membrane. This chain is Vitamin B12 import system permease protein BtuC, found in Salmonella arizonae (strain ATCC BAA-731 / CDC346-86 / RSK2980).